The primary structure comprises 271 residues: uncharacterized protein (271 aa).

The N-terminal stretch at 1–18 (MKGFFLIAGFLLFARALC) is a signal peptide. Residues 19–187 (ASWNVEEGTL…FSPPPKRANY (169 aa)) lie on the Lumenal side of the membrane. Residues 188 to 208 (FLSICFSVSVVVSLIGLLGVW) traverse the membrane as a helical segment. Topologically, residues 209–230 (QKLLPKSNVYSVSSSSFARTFG) are cytoplasmic. Residues 231–251 (FASLAVAEILLFIYWTSLSIF) traverse the membrane as a helical segment. The Lumenal portion of the chain corresponds to 252–271 (QFGAYAAGVAIMCGIAAKSL).

The protein resides in the endoplasmic reticulum membrane. This is an uncharacterized protein from Schizosaccharomyces pombe (strain 972 / ATCC 24843) (Fission yeast).